Consider the following 362-residue polypeptide: Transcription factor bHLH133 (362 aa).

A bHLH domain is found at 209 to 258 (LQVPSSQSTLKVRKEKLGGRIASLHQLVSPFGKTDTASVLSEAIGYIRFL).

It belongs to the bHLH protein family. As to quaternary structure, homodimer.

The protein resides in the nucleus. This Arabidopsis thaliana (Mouse-ear cress) protein is Transcription factor bHLH133 (BHLH133).